Consider the following 576-residue polypeptide: 3-hydroxy-3-methylglutaryl coenzyme A reductase 1 (576 aa).

Residues 1 to 35 (MDSRRRPSKPLLTSSGEVLHRKQASPVTDEDQIHR) are disordered. The next 2 membrane-spanning stretches (helical) occupy residues 42–62 (ALPL…FSVA) and 89–109 (AIVS…IDFV). The active-site Charge relay system is the Glu-255. The N-linked (GlcNAc...) asparagine glycan is linked to Asn-319. Residues Lys-387 and Asp-463 each act as charge relay system in the active site. A helical membrane pass occupies residues 532–552 (LLATIVAGSVLAGELSLMSAI). Residue His-561 is the Proton donor of the active site. Residue Asn-565 is glycosylated (N-linked (GlcNAc...) asparagine).

Belongs to the HMG-CoA reductase family. In terms of tissue distribution, expressed in trichomes, leaves, flowers, roots and stems.

Its subcellular location is the endoplasmic reticulum membrane. It localises to the plastid. The protein resides in the chloroplast membrane. It is found in the peroxisome membrane. The enzyme catalyses (R)-mevalonate + 2 NADP(+) + CoA = (3S)-3-hydroxy-3-methylglutaryl-CoA + 2 NADPH + 2 H(+). The protein operates within metabolic intermediate biosynthesis; (R)-mevalonate biosynthesis; (R)-mevalonate from acetyl-CoA: step 3/3. In terms of biological role, catalyzes the synthesis of mevalonate, the specific precursor of all isoprenoid compounds present in plants. Component of the triterpene saponins (e.g. ginsenosides or panaxosides) and phytosterols biosynthetic pathways. Promotes triterpenes accumulation in roots. The sequence is that of 3-hydroxy-3-methylglutaryl coenzyme A reductase 1 from Cannabis sativa (Hemp).